We begin with the raw amino-acid sequence, 156 residues long: Small ribosomal subunit protein uS7 (156 aa).

Belongs to the universal ribosomal protein uS7 family. As to quaternary structure, part of the 30S ribosomal subunit. Contacts proteins S9 and S11.

Its function is as follows. One of the primary rRNA binding proteins, it binds directly to 16S rRNA where it nucleates assembly of the head domain of the 30S subunit. Is located at the subunit interface close to the decoding center, probably blocks exit of the E-site tRNA. The protein is Small ribosomal subunit protein uS7 of Vibrio campbellii (strain ATCC BAA-1116).